Here is a 628-residue protein sequence, read N- to C-terminus: (-)-beta-pinene synthase 1, chloroplastic (628 aa).

Residues 1-51 (MDLISVLPSASKSCVCLHKPLSSSTHKLKPFCRTIRILGMPRPRKSVLMVS) constitute a chloroplast transit peptide. Positions 379, 383, and 531 each coordinate Mg(2+). The short motif at 379–383 (DDMYD) is the DDXXD motif element.

Belongs to the terpene synthase family. Tpsd subfamily. Requires Mg(2+) as cofactor. Mn(2+) serves as cofactor.

The protein resides in the plastid. Its subcellular location is the chloroplast. It catalyses the reaction (2E)-geranyl diphosphate = (1S,5S)-beta-pinene + diphosphate. The catalysed reaction is (2E)-geranyl diphosphate = (1S,5S)-alpha-pinene + diphosphate. Its pathway is terpene metabolism; oleoresin biosynthesis. The protein operates within secondary metabolite biosynthesis; terpenoid biosynthesis. Monoterpene synthase (TPS) involved in the biosynthesis of monoterpene natural products included in conifer oleoresin secretions and volatile emissions; these compounds contribute to biotic and abiotic stress defense against herbivores and pathogens. Catalyzes the conversion of (2E)-geranyl diphosphate (GPP) to (-)-beta-pinene and, to a lower extent, to (-)-alpha-pinene. This Pinus banksiana (Jack pine) protein is (-)-beta-pinene synthase 1, chloroplastic.